The chain runs to 734 residues: Phosphoribosylformylglycinamidine synthase subunit PurL (734 aa).

His-49 is an active-site residue. Residues Tyr-52 and Lys-91 each coordinate ATP. Position 93 (Glu-93) interacts with Mg(2+). Residues 94–97 (SHNH) and Arg-116 each bind substrate. The Proton acceptor role is filled by His-95. Asp-117 serves as a coordination point for Mg(2+). Position 240 (Gln-240) interacts with substrate. Asp-268 contributes to the Mg(2+) binding site. 312–314 (ESQ) provides a ligand contact to substrate. Positions 491 and 528 each coordinate ATP. Asn-529 provides a ligand contact to Mg(2+). Ser-531 provides a ligand contact to substrate.

Belongs to the FGAMS family. In terms of assembly, monomer. Part of the FGAM synthase complex composed of 1 PurL, 1 PurQ and 2 PurS subunits.

It localises to the cytoplasm. The enzyme catalyses N(2)-formyl-N(1)-(5-phospho-beta-D-ribosyl)glycinamide + L-glutamine + ATP + H2O = 2-formamido-N(1)-(5-O-phospho-beta-D-ribosyl)acetamidine + L-glutamate + ADP + phosphate + H(+). Its pathway is purine metabolism; IMP biosynthesis via de novo pathway; 5-amino-1-(5-phospho-D-ribosyl)imidazole from N(2)-formyl-N(1)-(5-phospho-D-ribosyl)glycinamide: step 1/2. Part of the phosphoribosylformylglycinamidine synthase complex involved in the purines biosynthetic pathway. Catalyzes the ATP-dependent conversion of formylglycinamide ribonucleotide (FGAR) and glutamine to yield formylglycinamidine ribonucleotide (FGAM) and glutamate. The FGAM synthase complex is composed of three subunits. PurQ produces an ammonia molecule by converting glutamine to glutamate. PurL transfers the ammonia molecule to FGAR to form FGAM in an ATP-dependent manner. PurS interacts with PurQ and PurL and is thought to assist in the transfer of the ammonia molecule from PurQ to PurL. In Zymomonas mobilis subsp. mobilis (strain ATCC 31821 / ZM4 / CP4), this protein is Phosphoribosylformylglycinamidine synthase subunit PurL.